Reading from the N-terminus, the 761-residue chain is 1,2-alpha-glucosylglycerol phosphorylase (761 aa).

Residue 327 to 328 (YQ) participates in glycerol binding. 333 to 334 (WD) is a binding site for substrate. The active-site Proton donor is the Glu-475. Residue 587-588 (KQ) participates in substrate binding.

This sequence belongs to the glycosyl hydrolase 65 family. Homodimer.

The catalysed reaction is 2-O-(alpha-D-glucopyranosyl)glycerol + phosphate = beta-D-glucose 1-phosphate + glycerol. In terms of biological role, catalyzes both the (1) reversible phosphorolysis of 2-O-alpha-D-glucopyranosyl-sn-glycerol (GG) from beta-D-glucose 1-phosphate (betaGlc1P) and glycerol and (2) the hydrolysis of betaGlc1P. the betaGlc1P hydrolysis is a glucosyl-transfer reaction to an acceptor water molecule that produces an anomer-inverted alpha-glucose, not a phosphatase-type reaction. In the absence of glycerol produces alpha-D-glucopyranose and phosphate from beta-D-glucopyranose 1-phosphate. This chain is 1,2-alpha-glucosylglycerol phosphorylase, found in Bacillus selenitireducens (strain ATCC 700615 / DSM 15326 / MLS10).